We begin with the raw amino-acid sequence, 168 residues long: Small ribosomal subunit protein bS6 (168 aa).

Positions 103-168 (RQAIAEEKEK…AAADKSDDNA (66 aa)) are disordered. Over residues 106-115 (IAEEKEKKAE) the composition is skewed to basic and acidic residues. Low complexity predominate over residues 116–125 (GQAAADAAPA).

It belongs to the bacterial ribosomal protein bS6 family.

Functionally, binds together with bS18 to 16S ribosomal RNA. This Desulfosudis oleivorans (strain DSM 6200 / JCM 39069 / Hxd3) (Desulfococcus oleovorans) protein is Small ribosomal subunit protein bS6.